Here is a 114-residue protein sequence, read N- to C-terminus: UPF0145 protein TT_C1581 (114 aa).

Belongs to the UPF0145 family.

The protein is UPF0145 protein TT_C1581 of Thermus thermophilus (strain ATCC BAA-163 / DSM 7039 / HB27).